Consider the following 107-residue polypeptide: Universal stress protein B homolog (107 aa).

The next 2 membrane-spanning stretches (helical) occupy residues 6 to 26 and 86 to 106; these read IILF…LTAL and VREL…AAFL.

This sequence belongs to the universal stress protein B family.

The protein resides in the cell inner membrane. In Vibrio vulnificus (strain CMCP6), this protein is Universal stress protein B homolog.